A 1357-amino-acid chain; its full sequence is DNA-directed RNA polymerase subunit beta (1357 aa).

The protein belongs to the RNA polymerase beta chain family. As to quaternary structure, the RNAP catalytic core consists of 2 alpha, 1 beta, 1 beta' and 1 omega subunit. When a sigma factor is associated with the core the holoenzyme is formed, which can initiate transcription.

It catalyses the reaction RNA(n) + a ribonucleoside 5'-triphosphate = RNA(n+1) + diphosphate. DNA-dependent RNA polymerase catalyzes the transcription of DNA into RNA using the four ribonucleoside triphosphates as substrates. This chain is DNA-directed RNA polymerase subunit beta, found in Acinetobacter baumannii (strain ATCC 17978 / DSM 105126 / CIP 53.77 / LMG 1025 / NCDC KC755 / 5377).